The primary structure comprises 324 residues: Probable pectinesterase A (324 aa).

A signal peptide spans 1 to 19 (MHGSLLKLALLSFSLGSSA). Residue Gln142 participates in substrate binding. The Proton donor role is filled by Asp165. Asp186 (nucleophile) is an active-site residue. Substrate-binding residues include Arg246 and Trp248. Asn285 is a glycosylation site (N-linked (GlcNAc...) asparagine).

It belongs to the pectinesterase family.

The protein resides in the secreted. The catalysed reaction is [(1-&gt;4)-alpha-D-galacturonosyl methyl ester](n) + n H2O = [(1-&gt;4)-alpha-D-galacturonosyl](n) + n methanol + n H(+). Its pathway is glycan metabolism; pectin degradation; 2-dehydro-3-deoxy-D-gluconate from pectin: step 1/5. Its function is as follows. Involved in maceration and soft-rotting of plant tissue. This chain is Probable pectinesterase A (pmeA), found in Aspergillus oryzae (strain ATCC 42149 / RIB 40) (Yellow koji mold).